We begin with the raw amino-acid sequence, 327 residues long: MTITLTENKRKSMEKLSVDGVISALAFDQRGALKRMMAQHQTKEPTVEQIEELKSLVSEELTPFASSILLDPEYGLPASRVRSEEAGLLLAYEKTGYDATTTSRLPDCLDVWSAKRIKEAGAEAVKFLLYYDIDGDQDVNEQKKAYIERIGSECRAEDIPFYLEILTYDEKIADNASPEFAKVKAHKVNEAMKVFSKERFGVDVLKVEVPVNMKFVEGFADGEVLFTKEEAAQAFRDQEASTDLPYIYLSAGVSAKLFQDTLVFAAESGAKFNGVLCGRATWAGSVKVYIEEGPQAAREWLRTEGFKNIDELNKVLDKTASPWTEKM.

It belongs to the aldolase LacD family.

It carries out the reaction D-tagatofuranose 1,6-bisphosphate = D-glyceraldehyde 3-phosphate + dihydroxyacetone phosphate. Its pathway is carbohydrate metabolism; D-tagatose 6-phosphate degradation; D-glyceraldehyde 3-phosphate and glycerone phosphate from D-tagatose 6-phosphate: step 2/2. The sequence is that of Tagatose 1,6-diphosphate aldolase 2 (lacD2) from Streptococcus pyogenes serotype M1.